Reading from the N-terminus, the 705-residue chain is Complement C1r subcomponent (705 aa).

The N-terminal stretch at 1-17 (MWLLYLLVPALFCRAGG) is a signal peptide. The region spanning 18-141 (SIPIPQKLFG…KGFLAYYQAV (124 aa)) is the CUB 1 domain. 3 residues coordinate Ca(2+): glutamate 66, aspartate 74, and aspartate 119. A disulfide bridge links cysteine 71 with cysteine 89. A glycan (N-linked (GlcNAc...) asparagine) is linked at asparagine 125. Residues aspartate 142, leucine 143, and glutamate 145 each contribute to the Ca(2+) site. Positions 142 to 190 (DLDECASRSKSGEEDPQPQCQHLCHNYVGGYFCSCRPGYELQEDTHSCQ) constitute an EGF-like; calcium-binding domain. 4 disulfide bridges follow: cysteine 146–cysteine 165, cysteine 161–cysteine 174, cysteine 176–cysteine 189, and cysteine 193–cysteine 220. The Ca(2+) site is built by asparagine 167, tyrosine 168, and glycine 171. A (3R)-3-hydroxyasparagine modification is found at asparagine 167. Residues 193-305 (CSSELYTEAS…RGWKLRYTTE (113 aa)) form the CUB 2 domain. Position 206 is a phosphoserine; by CK2 (serine 206). A glycan (N-linked (GlcNAc...) asparagine) is linked at asparagine 221. Residues aspartate 243, aspartate 253, aspartate 290, and aspartate 294 each contribute to the Ca(2+) site. A disulfide bridge connects residues cysteine 250 and cysteine 268. Sushi domains follow at residues 307-373 (IKCP…RCKI) and 374-449 (KDCG…RCLP). Cystine bridges form between cysteine 309-cysteine 358, cysteine 338-cysteine 371, cysteine 376-cysteine 429, cysteine 406-cysteine 447, and cysteine 451-cysteine 577. Positions 464–702 (IIGGQKAKMG…YVDWIKKEME (239 aa)) constitute a Peptidase S1 domain. The active-site Charge relay system is histidine 502. An N-linked (GlcNAc...) asparagine glycan is attached at asparagine 514. The active-site Charge relay system is aspartate 557. Asparagine 581 is a glycosylation site (N-linked (GlcNAc...) asparagine). Cystine bridges form between cysteine 620–cysteine 639 and cysteine 650–cysteine 680. Catalysis depends on serine 654, which acts as the Charge relay system.

This sequence belongs to the peptidase S1 family. As to quaternary structure, core component of the complement C1 complex, a calcium-dependent complex composed of 1 molecule of the C1Q subcomplex, 2 molecules of C1R and 2 molecules of C1S. The C1Q subcomplex is composed 18 subunits: 3 chains of C1QA, C1QB, and C1QC trimerize to form 6 collagen-like triple helices connected to six globular ligand-recognition modules. Within the C1 complex, C1R is a dimer of identical chains, each of which is activated by cleavage into two chains, heavy and light, connected by disulfide bonds. In terms of processing, cleaved and activated by autocatalytic processing to generate Complement C1r subcomponent heavy and light chains that are connected by disulfide bonds. The iron and 2-oxoglutarate dependent 3-hydroxylation of aspartate and asparagine is (R) stereospecific within EGF domains.

It is found in the secreted. The protein localises to the cell surface. The catalysed reaction is Selective cleavage of Lys(or Arg)-|-Ile bond in complement subcomponent C1s to form the active form of C1s (EC 3.4.21.42).. With respect to regulation, activated by the C1Q subcomplex of the C1 complex following C1Q binding to immunoglobulins (IgG or IgM) complexed with antigens to form antigen-antibody complexes on the surface of pathogens. Immunoglobulin-binding promotes autoactivation of C1R, which results in the cleavage of the Arg-Ile bond in the catalytic domain. Functionally, serine protease component of the complement C1 complex, a multiprotein complex that initiates the classical pathway of the complement system, a cascade of proteins that leads to phagocytosis and breakdown of pathogens and signaling that strengthens the adaptive immune system. C1R catalyzes the first enzymatic step in the classical complement pathway: it is activated by the C1Q subcomplex of the C1 complex, which associates with IgG or IgM immunoglobulins complexed with antigens to form antigen-antibody complexes on the surface of pathogens. Immunoglobulin-binding promotes the autocatalytic cleavage and activation of C1R. Activated C1R then cleaves and activates C1S, the second protease of the classical complement pathway. It is unclear if C1R activates C1S within single, strained C1 complexes or between neighboring C1 complexes on surfaces. The polypeptide is Complement C1r subcomponent (Homo sapiens (Human)).